We begin with the raw amino-acid sequence, 136 residues long: Biopolymer transport protein exbD2 (136 aa).

The Cytoplasmic segment spans residues 1–23; the sequence is MAFSTGGNRGPMADINVTPLVDV. A helical transmembrane segment spans residues 24-44; the sequence is MLVLLIIFIVTAPIMTYPIAV. Residues 45 to 136 lie on the Periplasmic side of the membrane; that stretch reads DLPQRVLNPP…SQMKKIGFMQ (92 aa).

The protein belongs to the ExbD/TolR family. The accessory proteins ExbB and ExbD seem to form a complex with TonB.

The protein resides in the cell inner membrane. In terms of biological role, involved in the TonB-dependent energy-dependent transport of various receptor-bound substrates. The protein is Biopolymer transport protein exbD2 (exbD2) of Xanthomonas campestris pv. campestris (strain ATCC 33913 / DSM 3586 / NCPPB 528 / LMG 568 / P 25).